The sequence spans 506 residues: Transforming growth factor beta-1-induced transcript 1 protein (506 aa).

The short motif at 3 to 15 (DLDALLADLQITT) is the LD motif 1 element. A disordered region spans residues 15–62 (TPPRCPVLLTDSPEKPQPTETRPPPPPYDPKTAMSNKTSDHETFPVDK). Residues 52–62 (TSDHETFPVDK) are compositionally biased toward basic and acidic residues. 2 short sequence motifs (LD motif) span residues 87–99 (ELDR…NATQ) and 139–150 (ELDRLMASLSDF). 2 disordered regions span residues 154–201 (NTVS…PTPK) and 221–244 (SDEV…ATSV). Residues 168–177 (GSEEVSRPGD) are compositionally biased toward basic and acidic residues. An LD motif 4 motif is present at residues 248 to 260 (DLDSMLVKLQSGL). LIM zinc-binding domains lie at 271 to 330 (GLCE…LYAP), 331 to 388 (RCAL…RLFG), 389 to 448 (AVCA…RRGS), and 449 to 506 (LCAG…RLYG).

The protein belongs to the paxillin family. Interacts with tcf3 and tcf7l2.

The protein localises to the cell junction. It is found in the focal adhesion. It localises to the nucleus matrix. The protein resides in the cytoplasm. Its subcellular location is the cytoskeleton. Functions as a molecular adapter coordinating multiple protein-protein interactions at the focal adhesion complex and in the nucleus. May regulate both Wnt and steroid signaling pathways and play a role in the processes of cell growth, proliferation, migration, differentiation and senescence. May have a zinc-dependent DNA-binding activity. In Xenopus laevis (African clawed frog), this protein is Transforming growth factor beta-1-induced transcript 1 protein (tgfb1i1).